Reading from the N-terminus, the 705-residue chain is Polyribonucleotide nucleotidyltransferase (705 aa).

2 residues coordinate Mg(2+): D487 and D493. The region spanning 554–613 (PKILTMKINPDKIRDVIGPSGKQINKIIEDTGVKIDIEQDGTIFISSTEEDMNQKAKKII) is the KH domain. Residues 623 to 691 (GQLYLGKVKR…KQGRVNLSRK (69 aa)) enclose the S1 motif domain.

Belongs to the polyribonucleotide nucleotidyltransferase family. The cofactor is Mg(2+).

Its subcellular location is the cytoplasm. The catalysed reaction is RNA(n+1) + phosphate = RNA(n) + a ribonucleoside 5'-diphosphate. Involved in mRNA degradation. Catalyzes the phosphorolysis of single-stranded polyribonucleotides processively in the 3'- to 5'-direction. This Bacillus pumilus (strain SAFR-032) protein is Polyribonucleotide nucleotidyltransferase.